Here is a 171-residue protein sequence, read N- to C-terminus: Myosin regulatory light polypeptide 9 (171 aa).

The segment covering 1-15 (MSSKRAKAKTTKKRP) has biased composition (basic residues). Residues 1–21 (MSSKRAKAKTTKKRPQSATSN) form a disordered region. The residue at position 2 (S2) is an N-acetylserine. T19 carries the phosphothreonine; by MLCK, CIT and ROCK2 modification. S20 bears the Phosphoserine; by CDC42BP, CIT, MLCK, PAK1, ROCK1, ROCK2, DAPK1, DAPK2 and ZIPK/DAPK3 mark. 2 EF-hand domains span residues 29–64 (SQIQEFKEAFNMIDQNRDGFIDKEDLHDMLASLGKN) and 98–133 (DPEDVIRNAFACFDEEASGFIHEDHLRELLTTMGDR). 4 residues coordinate Ca(2+): D42, N44, D46, and D53.

In terms of assembly, myosin is a hexamer of 2 heavy chains and 4 light chains: interacts with myosin heavy chain MYO19. Interacts with LUZP1; the interaction results in inhibition of phosphorylation of MYL9 by DAPK3. Phosphorylation increases the actin-activated myosin ATPase activity and thereby regulates the contractile activity. It is required to generate the driving force in the migration of the cells but not necessary for localization of myosin-2 at the leading edge. Phosphorylation is required for myotube formation. Phosphorylated by DAPK3; DAPK3-mediated phosphorylation is inhibited by LUZP1. As to expression, smooth muscle tissues and in some, but not all, nonmuscle cells.

The protein resides in the cytoplasm. It localises to the cytoskeleton. The protein localises to the cell cortex. In terms of biological role, myosin regulatory subunit that plays an important role in regulation of both smooth muscle and nonmuscle cell contractile activity via its phosphorylation. Implicated in cytokinesis, receptor capping, and cell locomotion. In myoblasts, may regulate PIEZO1-dependent cortical actomyosin assembly involved in myotube formation. This is Myosin regulatory light polypeptide 9 (Myl9) from Rattus norvegicus (Rat).